A 238-amino-acid chain; its full sequence is Sarcospan (238 aa).

Residues 1-33 (MGKDRQPRGQQRQGDAAGPDDPGPKKGAGTREQ) are disordered. The Extracellular portion of the chain corresponds to 1–48 (MGKDRQPRGQQRQGDAAGPDDPGPKKGAGTREQRGEEEAQTCCGCRFP). The segment covering 8–20 (RGQQRQGDAAGPD) has biased composition (low complexity). Residues 49-69 (LLLALLQLALGVAVTVVGFLM) form a helical membrane-spanning segment. The Cytoplasmic portion of the chain corresponds to 70–81 (ASVSSSLLVRAT). Residues 82–102 (PYWAGIIVCVVAYLGLFMLCV) form a helical membrane-spanning segment. The Cytoplasmic portion of the chain corresponds to 103-117 (SYQVDERTCIQFSMK). A helical transmembrane segment spans residues 118–138 (LLYFVLSALGLVVCVLAVAFA). Residues 139-188 (AHHYSLLTHLTCENAPDSCQCKLPSSEPLSRTFVYRDVTDCTSITGTFQV) are Extracellular-facing. Residues 189-209 (FLLVQMVLNLVCGLVCLVACF) traverse the membrane as a helical segment. The Cytoplasmic portion of the chain corresponds to 210-238 (VMWKHRYQVFYVGVRMCPLSASEGQQQKV).

Its subcellular location is the cell membrane. The protein resides in the sarcolemma. It is found in the postsynaptic cell membrane. Its function is as follows. Component of the dystrophin-glycoprotein complex (DGC), a complex that spans the muscle plasma membrane and forms a link between the F-actin cytoskeleton and the extracellular matrix. Preferentially associates with the sarcoglycan subcomplex of the DGC. This Oryctolagus cuniculus (Rabbit) protein is Sarcospan (SSPN).